We begin with the raw amino-acid sequence, 605 residues long: Protein cueball (605 aa).

The N-terminal stretch at 1–31 (MAYIDQKHNTFWDDFAIALRDKIVFLNSTWG) is a signal peptide. N-linked (GlcNAc...) asparagine glycosylation is found at Asn-27, Asn-64, and Asn-85. Residues 32–486 (EIHASAHRFE…QCGPAPPVQG (455 aa)) are Extracellular-facing. LDL-receptor class B repeat units follow at residues 53–97 (EMIY…DPLN), 98–145 (RNLF…DICR), 146–190 (RQLY…DQLS), and 191–236 (DRIF…NEDA). Residues Asn-261 and Asn-314 are each glycosylated (N-linked (GlcNAc...) asparagine). 2 consecutive EGF-like domains span residues 322–359 (EGDRISQLEREHCLNGASFMSRGEFCICPVGFKGARCE) and 394–431 (EYHKCNGHCLNSGHCSMDKESDAMRCECRPNFGGERCE). Intrachain disulfides connect Cys-334–Cys-347, Cys-349–Cys-358, Cys-398–Cys-408, Cys-402–Cys-419, and Cys-421–Cys-430. Residues Asn-433 and Asn-464 are each glycosylated (N-linked (GlcNAc...) asparagine). Residues 487–507 (PLIIVIVLGLVTTSGLVALTV) form a helical membrane-spanning segment. At 508-605 (HGVRLIYKPK…IHSMEDNLLS (98 aa)) the chain is on the cytoplasmic side.

The protein belongs to the cueball family.

The protein localises to the cell membrane. Its function is as follows. Has a role in spermatogenesis and oogenesis. The protein is Protein cueball of Drosophila grimshawi (Hawaiian fruit fly).